Reading from the N-terminus, the 194-residue chain is NADH-quinone oxidoreductase subunit B (194 aa).

The segment covering 1–11 has biased composition (pro residues); sequence MGVIATPPPSV. The interval 1 to 24 is disordered; sequence MGVIATPPPSVQGPSSQVPSSAPI. Low complexity predominate over residues 12–21; sequence QGPSSQVPSS. [4Fe-4S] cluster is bound by residues C72, C73, C137, and C167.

This sequence belongs to the complex I 20 kDa subunit family. In terms of assembly, NDH-1 is composed of 14 different subunits. Subunits NuoB, C, D, E, F, and G constitute the peripheral sector of the complex. The cofactor is [4Fe-4S] cluster.

Its subcellular location is the cell inner membrane. The enzyme catalyses a quinone + NADH + 5 H(+)(in) = a quinol + NAD(+) + 4 H(+)(out). Its function is as follows. NDH-1 shuttles electrons from NADH, via FMN and iron-sulfur (Fe-S) centers, to quinones in the respiratory chain. The immediate electron acceptor for the enzyme in this species is believed to be ubiquinone. Couples the redox reaction to proton translocation (for every two electrons transferred, four hydrogen ions are translocated across the cytoplasmic membrane), and thus conserves the redox energy in a proton gradient. This Rhodospirillum centenum (strain ATCC 51521 / SW) protein is NADH-quinone oxidoreductase subunit B.